Here is a 47-residue protein sequence, read N- to C-terminus: MGNPKSNQQPFVPQHIGTKPREAGGNKGKQMQDQSGQHPQVIQTKGE.

Polar residues-rich tracts occupy residues 1–11 (MGNPKSNQQPF) and 29–47 (KQMQDQSGQHPQVIQTKGE). A disordered region spans residues 1–47 (MGNPKSNQQPFVPQHIGTKPREAGGNKGKQMQDQSGQHPQVIQTKGE).

Belongs to the SspN family.

It localises to the spore core. The polypeptide is Small, acid-soluble spore protein N (Anoxybacillus flavithermus (strain DSM 21510 / WK1)).